Reading from the N-terminus, the 819-residue chain is Putative U-box domain-containing protein 53 (819 aa).

Disordered stretches follow at residues 208 to 309 (TSDT…NPQF) and 398 to 433 (KETE…KEKL). The segment covering 223 to 237 (ERTSSSCSSGSGANS) has biased composition (low complexity). Positions 238 to 260 (DVMSNALKSNPHTLSNKRMQNLP) are enriched in polar residues. The span at 278-296 (DETKKRSSDAAEEASKRSS) shows a compositional bias: basic and acidic residues. The span at 297–307 (PETSRSVSWNP) shows a compositional bias: polar residues. Positions 395–437 (IAKKETEKFEQKRREEREAAQRREAEMKATHEAKEKEKLEESS) form a coiled coil. The region spanning 460-728 (FSEDLKIGMG…DLEDQILPVL (269 aa)) is the Protein kinase domain. ATP is bound by residues 466–474 (IGMGAYGDV) and K487. Catalysis depends on D582, which acts as the Proton acceptor. A U-box domain is found at 748-819 (QPPSHFFCPL…AIVEWRNRNQ (72 aa)).

The protein belongs to the protein kinase superfamily. Ser/Thr protein kinase family.

The enzyme catalyses L-seryl-[protein] + ATP = O-phospho-L-seryl-[protein] + ADP + H(+). It catalyses the reaction L-threonyl-[protein] + ATP = O-phospho-L-threonyl-[protein] + ADP + H(+). The catalysed reaction is S-ubiquitinyl-[E2 ubiquitin-conjugating enzyme]-L-cysteine + [acceptor protein]-L-lysine = [E2 ubiquitin-conjugating enzyme]-L-cysteine + N(6)-ubiquitinyl-[acceptor protein]-L-lysine.. Its pathway is protein modification; protein ubiquitination. Functions as an E3 ubiquitin ligase. The polypeptide is Putative U-box domain-containing protein 53 (PUB53) (Arabidopsis thaliana (Mouse-ear cress)).